Reading from the N-terminus, the 486-residue chain is MGSKSPEGHRQAPHASNCNELKPANPDPQISQNGSGSADLDRGVIGDDDDDEDAEENGVNTETPNVGKLNQPPFPNLDQVHVTTTDGLCITEKKKKRKKSNKKKKKTKSGALPATELKQTSPPRVLVSTLFPSEYPVGELVPYDCTARTTDEELRYNSRLWDDDFLPDYRQAAEIHRQVRQYAQKELIKPGATLLSIAEGIEDGVRALSGHQGLEPGDFFKAGMGFPTGLCLNHIAAHWTPNPREKDVILDKGDVLKVDFGVHVNGRIVDSAFTVAFDDKYDNLLTAVREATNTGIKHAGVDARMSDIGAAIQEVMESYEVEIDGKVFPVKAIRNITGHDILRYHIHGGKQIPFIKNNNQDKMEEGEVYAIETFGSTGRGFLDDDVGVYGYGRNENMSGANLRLSSAKSLLKTIDASFGSIVFSRRYLERLGVKNYLLGMKNLIDNGIVECYSPLVDVKGSYTAQFEHTILLHSGGKEVISRGDDY.

Residues 1–10 (MGSKSPEGHR) show a composition bias toward basic and acidic residues. The segment at 1–120 (MGSKSPEGHR…ALPATELKQT (120 aa)) is disordered. Positions 46-56 (GDDDDDEDAEE) are enriched in acidic residues. A compositionally biased stretch (basic residues) spans 93 to 108 (KKKKRKKSNKKKKKTK). His238 contributes to the substrate binding site. A divalent metal cation is bound by residues Asp259, Asp270, and His339. His347 contributes to the substrate binding site. The a divalent metal cation site is built by Glu372 and Glu467.

It belongs to the peptidase M24A family. Methionine aminopeptidase eukaryotic type 2 subfamily. Co(2+) is required as a cofactor. It depends on Zn(2+) as a cofactor. The cofactor is Mn(2+). Fe(2+) serves as cofactor.

It is found in the cytoplasm. The enzyme catalyses Release of N-terminal amino acids, preferentially methionine, from peptides and arylamides.. In terms of biological role, cotranslationally removes the N-terminal methionine from nascent proteins. The N-terminal methionine is often cleaved when the second residue in the primary sequence is small and uncharged (Met-Ala-, Cys, Gly, Pro, Ser, Thr, or Val). The protein is Methionine aminopeptidase 2-2 of Aspergillus fumigatus (strain ATCC MYA-4609 / CBS 101355 / FGSC A1100 / Af293) (Neosartorya fumigata).